A 157-amino-acid chain; its full sequence is Endoribonuclease YbeY (157 aa).

The Zn(2+) site is built by H118, H122, and H128.

The protein belongs to the endoribonuclease YbeY family. Zn(2+) serves as cofactor.

The protein localises to the cytoplasm. Its function is as follows. Single strand-specific metallo-endoribonuclease involved in late-stage 70S ribosome quality control and in maturation of the 3' terminus of the 16S rRNA. This Bordetella parapertussis (strain 12822 / ATCC BAA-587 / NCTC 13253) protein is Endoribonuclease YbeY.